Reading from the N-terminus, the 120-residue chain is cAMP-responsive element-binding protein-like 2 (120 aa).

Residues M1–I24 are disordered. The segment covering K10–P21 has biased composition (basic residues). Residues K23–S86 enclose the bZIP domain. Residues K29–R60 form a basic motif region. The leucine-zipper stretch occupies residues I62–L69. Positions T93–W120 are disordered.

It belongs to the bZIP family. ATF subfamily. Interacts with CREB1; regulates CREB1 phosphorylation, stability and transcriptional activity. Interacts with immediate-early (IE) protein BICP22 of bovine herpesvirus-1 (BHV-1). In terms of processing, phosphorylated by AMPK.

The protein localises to the nucleus. In terms of biological role, probable regulator of CREB1 transcriptional activity which is involved in adipose cells differentiation. May also play a regulatory role in the cell cycle. This Bos taurus (Bovine) protein is cAMP-responsive element-binding protein-like 2 (CREBL2).